Consider the following 386-residue polypeptide: Dual-specificity RNA methyltransferase RlmN (386 aa).

The active-site Proton acceptor is E96. The 239-residue stretch at 102–340 (ENDRATLCVS…VITRRTRGED (239 aa)) folds into the Radical SAM core domain. A disulfide bridge connects residues C109 and C345. The [4Fe-4S] cluster site is built by C116, C120, and C123. S-adenosyl-L-methionine is bound by residues 170–171 (GE), S202, 224–226 (SIH), and N302. C345 acts as the S-methylcysteine intermediate in catalysis.

This sequence belongs to the radical SAM superfamily. RlmN family. It depends on [4Fe-4S] cluster as a cofactor.

Its subcellular location is the cytoplasm. It carries out the reaction adenosine(2503) in 23S rRNA + 2 reduced [2Fe-2S]-[ferredoxin] + 2 S-adenosyl-L-methionine = 2-methyladenosine(2503) in 23S rRNA + 5'-deoxyadenosine + L-methionine + 2 oxidized [2Fe-2S]-[ferredoxin] + S-adenosyl-L-homocysteine. The catalysed reaction is adenosine(37) in tRNA + 2 reduced [2Fe-2S]-[ferredoxin] + 2 S-adenosyl-L-methionine = 2-methyladenosine(37) in tRNA + 5'-deoxyadenosine + L-methionine + 2 oxidized [2Fe-2S]-[ferredoxin] + S-adenosyl-L-homocysteine. Specifically methylates position 2 of adenine 2503 in 23S rRNA and position 2 of adenine 37 in tRNAs. m2A2503 modification seems to play a crucial role in the proofreading step occurring at the peptidyl transferase center and thus would serve to optimize ribosomal fidelity. The sequence is that of Dual-specificity RNA methyltransferase RlmN from Colwellia psychrerythraea (strain 34H / ATCC BAA-681) (Vibrio psychroerythus).